The following is a 366-amino-acid chain: Ribosomal RNA large subunit methyltransferase M (366 aa).

Residues S188, C221 to G224, D240, D260, and D277 each bind S-adenosyl-L-methionine. K306 acts as the Proton acceptor in catalysis.

Belongs to the class I-like SAM-binding methyltransferase superfamily. RNA methyltransferase RlmE family. RlmM subfamily. In terms of assembly, monomer.

Its subcellular location is the cytoplasm. The catalysed reaction is cytidine(2498) in 23S rRNA + S-adenosyl-L-methionine = 2'-O-methylcytidine(2498) in 23S rRNA + S-adenosyl-L-homocysteine + H(+). In terms of biological role, catalyzes the 2'-O-methylation at nucleotide C2498 in 23S rRNA. The chain is Ribosomal RNA large subunit methyltransferase M from Erwinia tasmaniensis (strain DSM 17950 / CFBP 7177 / CIP 109463 / NCPPB 4357 / Et1/99).